The following is a 359-amino-acid chain: Histidinol-phosphate aminotransferase (359 aa).

Lys217 bears the N6-(pyridoxal phosphate)lysine mark.

Belongs to the class-II pyridoxal-phosphate-dependent aminotransferase family. Histidinol-phosphate aminotransferase subfamily. In terms of assembly, homodimer. Pyridoxal 5'-phosphate is required as a cofactor.

It carries out the reaction L-histidinol phosphate + 2-oxoglutarate = 3-(imidazol-4-yl)-2-oxopropyl phosphate + L-glutamate. The protein operates within amino-acid biosynthesis; L-histidine biosynthesis; L-histidine from 5-phospho-alpha-D-ribose 1-diphosphate: step 7/9. The protein is Histidinol-phosphate aminotransferase of Citrobacter koseri (strain ATCC BAA-895 / CDC 4225-83 / SGSC4696).